Consider the following 335-residue polypeptide: Fructose-1,6-bisphosphatase class 1 (335 aa).

Residues Glu90, Asp112, Leu114, and Asp115 each coordinate Mg(2+). Residues 115–118, Asn210, and Lys276 contribute to the substrate site; that span reads DGSS. Glu282 provides a ligand contact to Mg(2+).

The protein belongs to the FBPase class 1 family. As to quaternary structure, homotetramer. The cofactor is Mg(2+).

Its subcellular location is the cytoplasm. It carries out the reaction beta-D-fructose 1,6-bisphosphate + H2O = beta-D-fructose 6-phosphate + phosphate. The protein operates within carbohydrate biosynthesis; gluconeogenesis. This is Fructose-1,6-bisphosphatase class 1 from Ectopseudomonas mendocina (strain ymp) (Pseudomonas mendocina).